Consider the following 419-residue polypeptide: Probable glycosidase C21B10.07 (419 aa).

Disordered stretches follow at residues 1–20 (MGIP…AALS) and 29–67 (DPAR…NNEN). A compositionally biased stretch (basic and acidic residues) spans 30 to 59 (PARKNESTNDVIDNHTDTEIDDHDNDHENL). Residues 88 to 108 (FIWILIFIVALICSVLIGVLG) traverse the membrane as a helical segment. One can recognise a GH16 domain in the interval 122 to 387 (PSYKAKTYSL…WAGSSVYSSA (266 aa)). Catalysis depends on E237, which acts as the Nucleophile. Residue E242 is the Proton donor of the active site.

Belongs to the glycosyl hydrolase 16 family.

The protein localises to the membrane. The chain is Probable glycosidase C21B10.07 from Schizosaccharomyces pombe (strain 972 / ATCC 24843) (Fission yeast).